A 106-amino-acid chain; its full sequence is CDGSH iron-sulfur domain-containing protein 1 (106 aa).

Serine 2 carries the N-acetylserine modification. A helical; Signal-anchor for type III membrane protein transmembrane segment spans residues 10–29; sequence EWIAAVTIAAGTAAIGYLAY. Over 30–106 the chain is Cytoplasmic; it reads KRFYVKDHRN…GPLIIKKKDT (77 aa). Lysine 40 participates in a covalent cross-link: Glycyl lysine isopeptide (Lys-Gly) (interchain with G-Cter in ubiquitin). Lysine 53 functions as the Schiff-base intermediate with pyridoxal 5'-phosphate in the catalytic mechanism. An N6-acetyllysine; alternate mark is found at lysine 53 and lysine 66. Glycyl lysine isopeptide (Lys-Gly) (interchain with G-Cter in ubiquitin); alternate cross-links involve residues lysine 53 and lysine 66. [2Fe-2S] cluster-binding residues include cysteine 70 and cysteine 72. Residues lysine 76 and lysine 77 each participate in a glycyl lysine isopeptide (Lys-Gly) (interchain with G-Cter in ubiquitin) cross-link. Positions 81 and 85 each coordinate [2Fe-2S] cluster. Positions 84-106 are disordered; it reads SHTKHNEETGDNVGPLIIKKKDT. Lysine 87 is covalently cross-linked (Glycyl lysine isopeptide (Lys-Gly) (interchain with G-Cter in ubiquitin)). Lysine 102 carries the post-translational modification N6-acetyllysine; alternate. Residue lysine 102 forms a Glycyl lysine isopeptide (Lys-Gly) (interchain with G-Cter in ubiquitin); alternate linkage. Residues lysine 103 and lysine 104 each participate in a glycyl lysine isopeptide (Lys-Gly) (interchain with G-Cter in ubiquitin) cross-link.

It belongs to the CISD protein family. As to quaternary structure, homodimer. [2Fe-2S] cluster serves as cofactor. It depends on pyridoxal 5'-phosphate as a cofactor. In terms of processing, ubiquitinated by PRKN during mitophagy, leading to its degradation and enhancement of mitophagy. Deubiquitinated by USP30.

It localises to the mitochondrion outer membrane. It catalyses the reaction L-cysteine + 2-oxoglutarate = 2-oxo-3-sulfanylpropanoate + L-glutamate. Its function is as follows. L-cysteine transaminase that catalyzes the reversible transfer of the amino group from L-cysteine to the alpha-keto acid 2-oxoglutarate to respectively form 2-oxo-3-sulfanylpropanoate and L-glutamate. The catalytic cycle occurs in the presence of pyridoxal 5'-phosphate (PLP) cofactor that facilitates transamination by initially forming an internal aldimine with the epsilon-amino group of active site Lys-55 residue on the enzyme (PLP-enzyme aldimine), subsequently displaced by formation of an external aldimine with the substrate amino group (PLP-L-cysteine aldimine). The external aldimine is further deprotonated to form a carbanion intermediate, which in the presence of 2-oxoglutarate regenerates PLP yielding final products 2-oxo-3-sulfanylpropanoate and L-glutamate. The proton transfer in carbanion intermediate is suggested to be controlled by the active site lysine residue, whereas PLP stabilizes carbanion structure through electron delocalization, also known as the electron sink effect. Plays a key role in regulating maximal capacity for electron transport and oxidative phosphorylation. May be involved in iron-sulfur cluster shuttling and/or in redox reactions. Can transfer the [2Fe-2S] cluster to an apo-acceptor protein only when in the oxidation state, likely serving as a redox sensor that regulates mitochondrial iron-sulfur cluster assembly and iron trafficking upon oxidative stress. The chain is CDGSH iron-sulfur domain-containing protein 1 (CISD1) from Bos taurus (Bovine).